A 1120-amino-acid polypeptide reads, in one-letter code: Prophage side tail fiber protein homolog StfR (1120 aa).

3 disordered regions span residues 129-154 (KSAS…SARA), 221-442 (SAST…ATRA), and 960-1021 (SGRA…AGAH). Low complexity-rich tracts occupy residues 221 to 239 (SAST…ARDA), 248 to 395 (SSET…SASA), and 402 to 442 (RQAS…ATRA). The segment covering 985 to 1021 (DLGTKTTSSFDYGTKSTNNTGAHTHSVSGSTNSAGAH) has biased composition (polar residues).

It belongs to the tail fiber family.

The chain is Prophage side tail fiber protein homolog StfR (stfR) from Escherichia coli (strain K12).